The chain runs to 968 residues: A disintegrin and metalloproteinase with thrombospondin motifs 1 (968 aa).

Disordered regions lie at residues 1–23 (MQPK…DVQR) and 177–253 (APAV…RKKR). The signal sequence occupies residues 1-48 (MQPKVPLGSRKQKPCSDMGDVQRAARSRGSLSAHMLLLLLASITMLLC). Positions 49 to 253 (ARGAHGRPTE…SGPGSIRKKR (205 aa)) are excised as a propeptide. A Cysteine switch motif is present at residues 204–211 (AKCGVMDD). Cys206 provides a ligand contact to Zn(2+). The segment covering 214–229 (LPTSDSRPESQNTRNQ) has biased composition (polar residues). Residues 259 to 468 (RYVETMLVAD…GHGECLMDKP (210 aa)) form the Peptidase M12B domain. Ca(2+) is bound by residues Glu262, Asp345, and Asp352. Cystine bridges form between Cys334/Cys386, Cys363/Cys368, Cys380/Cys463, and Cys418/Cys447. His402 provides a ligand contact to Zn(2+). Residue Glu403 is part of the active site. Zn(2+)-binding residues include His406 and His412. Ca(2+)-binding residues include Cys463 and Asp466. Positions 477–559 (DLPGTLYDAN…TDMKHFATPV (83 aa)) constitute a Disintegrin domain. Intrachain disulfides connect Cys489/Cys512, Cys500/Cys522, Cys507/Cys541, and Cys535/Cys546. The N-linked (GlcNAc...) asparagine glycan is linked to Asn548. A TSP type-1 1 domain is found at 560–615 (HGSWGPWGPWGDCSRTCGGGVQYTMRECDNPVPKNGGKYCEGKRVRYRSCNIEDCP). Disulfide bonds link Cys572–Cys609, Cys576–Cys614, and Cys587–Cys599. Residues Asn721, Asn765, and Asn783 are each glycosylated (N-linked (GlcNAc...) asparagine). A spacer region spans residues 726–850 (KKMSGIVTST…YFMKKKTESF (125 aa)). 2 TSP type-1 domains span residues 855 to 911 (TFSE…LPCP) and 912 to 968 (HWQV…TQCS). Asn946 carries an N-linked (GlcNAc...) asparagine glycan.

The cofactor is Zn(2+). In terms of processing, the precursor is cleaved by a furin endopeptidase. Glycosylated. Can be O-fucosylated by POFUT2 on a serine or a threonine residue found within the consensus sequence C1-X(2)-(S/T)-C2-G of the TSP type-1 repeat domains where C1 and C2 are the first and second cysteine residue of the repeat, respectively. Fucosylated repeats can then be further glycosylated by the addition of a beta-1,3-glucose residue by the glucosyltransferase, B3GALTL. Fucosylation mediates the efficient secretion of ADAMTS family members. Can also be C-glycosylated with one or two mannose molecules on tryptophan residues within the consensus sequence W-X-X-W of the TPRs, and N-glycosylated. These other glycosylations can also facilitate secretion.

Its subcellular location is the secreted. The protein localises to the extracellular space. The protein resides in the extracellular matrix. In terms of biological role, metalloprotease which cleaves aggrecan, a cartilage proteoglycan, at the '1691-Glu-|-Leu-1692' site (within the chondroitin sulfate attachment domain), and may be involved in its turnover. Also cleaves COMP. Has angiogenic inhibitor activity. May play a critical role in follicular rupture. The protein is A disintegrin and metalloproteinase with thrombospondin motifs 1 (Adamts1) of Mus musculus (Mouse).